A 154-amino-acid polypeptide reads, in one-letter code: MPVEVSTIDRKWYRIIRKPKATSQEIVLFALRELKVDRYNPIVSVVLAHDALLLELNHKYRNINKPTNVLSFNYEALSHNCCLGEIFLSIDRLTYESKTLGVEVHAHFTHMLIHGVLHILGYDHEVPEDAQEMQALEIDLLSKRSIENPYLIQE.

Zn(2+)-binding residues include His114, His118, and His124.

It belongs to the endoribonuclease YbeY family. The cofactor is Zn(2+).

Its subcellular location is the cytoplasm. Its function is as follows. Single strand-specific metallo-endoribonuclease involved in late-stage 70S ribosome quality control and in maturation of the 3' terminus of the 16S rRNA. The sequence is that of Endoribonuclease YbeY from Anaplasma phagocytophilum (strain HZ).